A 217-amino-acid polypeptide reads, in one-letter code: Membrane-spanning 4-domains subfamily A member 6C (217 aa).

Over residues 1-20 (MIPQVVTNETITTISPNGIN) the composition is skewed to polar residues. The disordered stretch occupies residues 1–33 (MIPQVVTNETITTISPNGINFPQKDESQPTQQR). At 1–46 (MIPQVVTNETITTISPNGINFPQKDESQPTQQRQDSLKKHLKAEIK) the chain is on the cytoplasmic side. A helical transmembrane segment spans residues 47–67 (VIVAIQIMCAVTVLALGIILA). The Extracellular portion of the chain corresponds to 68–84 (SVPPVPYFNSVFSVLLK). A helical membrane pass occupies residues 85–105 (SGYPFIGALFFIASGILSIIT). The Cytoplasmic segment spans residues 106–121 (ERKSTKPLVDASLTLN). A helical transmembrane segment spans residues 122–142 (ILSVSFAFVGIIIISVSLAGL). At 143 to 186 (HPASEQCKQSKELSLIEHDYYQPFYNSDRSECAVTKSILTGALS) the chain is on the extracellular side. A helical membrane pass occupies residues 187 to 207 (VMLIISVLELGLALLSAMLWL). Residues 208–217 (REGVLTSLRM) lie on the Cytoplasmic side of the membrane.

This sequence belongs to the MS4A family. As to expression, expressed only by thymus, spleen, peripheral lymph node and bone marrow.

The protein resides in the membrane. Its function is as follows. May be involved in signal transduction as a component of a multimeric receptor complex. In Mus musculus (Mouse), this protein is Membrane-spanning 4-domains subfamily A member 6C (Ms4a6c).